Reading from the N-terminus, the 179-residue chain is Large ribosomal subunit protein uL5 (179 aa).

The protein belongs to the universal ribosomal protein uL5 family. Part of the 50S ribosomal subunit; part of the 5S rRNA/L5/L18/L25 subcomplex. Contacts the 5S rRNA and the P site tRNA. Forms a bridge to the 30S subunit in the 70S ribosome.

Functionally, this is one of the proteins that bind and probably mediate the attachment of the 5S RNA into the large ribosomal subunit, where it forms part of the central protuberance. In the 70S ribosome it contacts protein S13 of the 30S subunit (bridge B1b), connecting the 2 subunits; this bridge is implicated in subunit movement. Contacts the P site tRNA; the 5S rRNA and some of its associated proteins might help stabilize positioning of ribosome-bound tRNAs. The sequence is that of Large ribosomal subunit protein uL5 from Neisseria meningitidis serogroup A / serotype 4A (strain DSM 15465 / Z2491).